We begin with the raw amino-acid sequence, 345 residues long: GTPase Obg (345 aa).

Positions 1–158 (MFIDSVKITL…RLVRLELKLI (158 aa)) constitute an Obg domain. The 181-residue stretch at 159-339 (ADVGLVGFPN…LKFMLLEEIK (181 aa)) folds into the OBG-type G domain. Residues 165 to 172 (GFPNVGKS), 190 to 194 (FTTLT), 212 to 215 (DIPG), 280 to 283 (SKSD), and 320 to 322 (SSL) contribute to the GTP site. Positions 172 and 192 each coordinate Mg(2+).

It belongs to the TRAFAC class OBG-HflX-like GTPase superfamily. OBG GTPase family. In terms of assembly, monomer. Requires Mg(2+) as cofactor.

It is found in the cytoplasm. Functionally, an essential GTPase which binds GTP, GDP and possibly (p)ppGpp with moderate affinity, with high nucleotide exchange rates and a fairly low GTP hydrolysis rate. Plays a role in control of the cell cycle, stress response, ribosome biogenesis and in those bacteria that undergo differentiation, in morphogenesis control. The protein is GTPase Obg of Campylobacter jejuni subsp. jejuni serotype O:6 (strain 81116 / NCTC 11828).